Here is a 370-residue protein sequence, read N- to C-terminus: uncharacterized protein (370 aa).

This is an uncharacterized protein from Caenorhabditis elegans.